We begin with the raw amino-acid sequence, 312 residues long: MEIIFYHPTFNTAWWVNALEKALPHARVREWKVGDNNPADYALVWQPPVEMLAGRRLKAVFALGAGVDAILSKLNAHPEMLDASIPLFRLEDTGMGLQMQEYAVSQVLHWFRRFDDYQALKNQALWKPLPEYTREEFSVGIMGAGVLGAKVAESLQAWGFPLRCWSRSRKSWPGVESYVGREELHAFLNQTRVLINLLPNTAQTVGIINSELLDQLPDGAYVLNLARGVHVQEADLLAALDSGKLKGAMLDVFSQEPLPQESPLWRHPRVAMTPHIAAVTRPAEAIDYISRTITQLEKGEPVTGQVDRARGY.

The active site involves arginine 227. The active-site Proton donor is the histidine 275.

The protein belongs to the D-isomer specific 2-hydroxyacid dehydrogenase family. GhrA subfamily.

The protein resides in the cytoplasm. It carries out the reaction glycolate + NADP(+) = glyoxylate + NADPH + H(+). It catalyses the reaction (R)-glycerate + NAD(+) = 3-hydroxypyruvate + NADH + H(+). The enzyme catalyses (R)-glycerate + NADP(+) = 3-hydroxypyruvate + NADPH + H(+). Catalyzes the NADPH-dependent reduction of glyoxylate and hydroxypyruvate into glycolate and glycerate, respectively. This Salmonella enteritidis PT4 (strain P125109) protein is Glyoxylate/hydroxypyruvate reductase A.